Here is a 742-residue protein sequence, read N- to C-terminus: Envelope glycoprotein H (742 aa).

The N-terminal stretch at 1-29 (MRPGLPSYLIVLAVCLLSHLLSSRYGAEA) is a signal peptide. Residues 30-719 (ISEPLDKAFH…VVDATDSRLL (690 aa)) lie on the Virion surface side of the membrane. N-linked (GlcNAc...) asparagine; by host glycosylation is found at N55, N62, N67, and N192. The interval 217–280 (YLIDELRYVK…QTEKHELLVL (64 aa)) is interaction with gL. Residues N641 and N700 are each glycosylated (N-linked (GlcNAc...) asparagine; by host). The helical transmembrane segment at 720–740 (MMSVYALSAIIGIYLLYRMLK) threads the bilayer. At 741–742 (TC) the chain is on the intravirion side.

This sequence belongs to the herpesviridae glycoprotein H family. In terms of assembly, interacts with glycoprotein L (gL); this interaction is necessary for the correct processing and cell surface expression of gH. The heterodimer gH/gL seems to interact with gB trimers during fusion. Forms the envelope pentamer complex (PC) composed of gH, gL, UL128, UL130, and UL131A. The pentamer interacts with host NRP2. Forms the envelope trimer complex composed of gH, gL, and gO. The trimer interacts with host PDGFRA. The trimer also interacts with host EPHA2. In terms of processing, N-glycosylated, O-glycosylated, and sialylated.

The protein resides in the virion membrane. It localises to the host cell membrane. It is found in the host endosome membrane. In terms of biological role, the heterodimer glycoprotein H-glycoprotein L is required for the fusion of viral and plasma membranes leading to virus entry into the host cell. Following initial binding to host receptor, membrane fusion is mediated by the fusion machinery composed of gB and the heterodimer gH/gL. May also be involved in the fusion between the virion envelope and the outer nuclear membrane during virion morphogenesis. In human cytomegalovirus, forms two distincts complexes to mediate viral entry, a trimer and a pentamer at the surface of the virion envelope. The gH-gL-gO trimer is required for infection in fibroblasts by interacting with host PDGFRA, and in glioblastoma cells by interacting with host EPHA2. The gH-gL-UL128-UL130-UL131A pentamer is essential for viral entry in epithelial, endothelial and myeloid cells via interaction with host NRP2. This chain is Envelope glycoprotein H, found in Human cytomegalovirus (strain Towne) (HHV-5).